A 1106-amino-acid polypeptide reads, in one-letter code: Translation initiation factor IF-2 (1106 aa).

Composition is skewed to low complexity over residues 57 to 72 (GKAA…PDAG) and 81 to 97 (APST…SAPP). Disordered stretches follow at residues 57 to 434 (GKAA…QKVH) and 466 to 497 (PSKP…RQRR). 2 stretches are compositionally biased toward pro residues: residues 113 to 123 (PAKPAPSAPPS) and 138 to 148 (PAKPAPSAPPS). A compositionally biased stretch (low complexity) spans 172-199 (AKPVAKPASAPAPARPAQPLRPQASNRP). 2 stretches are compositionally biased toward pro residues: residues 200–214 (PQQP…PAAK) and 223–235 (TAPP…PGAP). Composition is skewed to low complexity over residues 251 to 292 (PNQQ…QQRR), 319 to 329 (PQGRQGGAPSR), and 395 to 405 (YRPAAAPGMAG). Over residues 408 to 422 (RRPDWDDSARLDALR) the composition is skewed to basic and acidic residues. Residues 482-497 (ALRRRKKETTRQRQRR) show a composition bias toward basic residues. The 174-residue stretch at 598–771 (RRPPVVTVMG…LLVTEVEDLK (174 aa)) folds into the tr-type G domain. The interval 607–614 (GHVDHGKT) is G1. GTP is bound at residue 607-614 (GHVDHGKT). The tract at residues 632–636 (GITQH) is G2. A G3 region spans residues 657–660 (DTPG). GTP is bound by residues 657–661 (DTPGH) and 711–714 (NKVD). A G4 region spans residues 711-714 (NKVD). Residues 747–749 (SAL) form a G5 region.

This sequence belongs to the TRAFAC class translation factor GTPase superfamily. Classic translation factor GTPase family. IF-2 subfamily.

Its subcellular location is the cytoplasm. Functionally, one of the essential components for the initiation of protein synthesis. Protects formylmethionyl-tRNA from spontaneous hydrolysis and promotes its binding to the 30S ribosomal subunits. Also involved in the hydrolysis of GTP during the formation of the 70S ribosomal complex. The chain is Translation initiation factor IF-2 from Synechococcus sp. (strain RCC307).